We begin with the raw amino-acid sequence, 474 residues long: Protein SAAL1 (474 aa).

Positions 1-10 (MDRNPSPPPP) are enriched in pro residues. Positions 1–21 (MDRNPSPPPPGRDKEEEEEVA) are disordered. Ser6 carries the phosphoserine modification. The residue at position 387 (Thr387) is a Phosphothreonine.

The protein belongs to the SAAL1 family. In terms of tissue distribution, highly expressed in testis and ovary, and to a lesser extent in the lung, spleen and the heart (at protein level).

The protein resides in the nucleus. Functionally, plays a role in promoting the proliferation of synovial fibroblasts in response to pro-inflammatory stimuli. In Homo sapiens (Human), this protein is Protein SAAL1 (SAAL1).